A 112-amino-acid chain; its full sequence is Large ribosomal subunit protein eL33y (112 aa).

Belongs to the eukaryotic ribosomal protein eL33 family.

The sequence is that of Large ribosomal subunit protein eL33y (RPL35AC) from Arabidopsis thaliana (Mouse-ear cress).